A 343-amino-acid chain; its full sequence is Methionine import ATP-binding protein MetN 3 (343 aa).

The region spanning 2-241 (IELSNITKVF…PKTPLAQKFI (240 aa)) is the ABC transporter domain. Residue 38–45 (GASGAGKS) coordinates ATP.

The protein belongs to the ABC transporter superfamily. Methionine importer (TC 3.A.1.24) family. The complex is composed of two ATP-binding proteins (MetN), two transmembrane proteins (MetI) and a solute-binding protein (MetQ).

Its subcellular location is the cell inner membrane. The catalysed reaction is L-methionine(out) + ATP + H2O = L-methionine(in) + ADP + phosphate + H(+). It carries out the reaction D-methionine(out) + ATP + H2O = D-methionine(in) + ADP + phosphate + H(+). Part of the ABC transporter complex MetNIQ involved in methionine import. Responsible for energy coupling to the transport system. This chain is Methionine import ATP-binding protein MetN 3, found in Pectobacterium atrosepticum (strain SCRI 1043 / ATCC BAA-672) (Erwinia carotovora subsp. atroseptica).